Consider the following 298-residue polypeptide: MFKSSKKEDSSKKNHNNKLIFAIRKLFSPIKNFFRQTKTPDNFFGVIKRLKINNQKMTLDECNIFANLLKIKDKTIADIMVPRSDIAAIKLTTNLEELSESIKLKVLHARTLIYDGTLDNVVGFIHIKDLFKAFATKQNGCLKKLIRKHIIAAPSMKLLDLLTKMRRERTHIAIVVDEYGGTDGLVTIEDLIEEIVGRIDDEHDQQLDSDNLKVINNSTIILNARVEVEVLEEIIGEKLKNDDEFDTIGGLVLTRVGSVPAIGTRINISENIEIEVTDATPRSLKQVKIRLKNALNSG.

2 CBS domains span residues 80–141 (MVPR…QNGC) and 145–202 (LIRK…IDDE).

The protein belongs to the UPF0053 family. Hemolysin C subfamily.

This is Possible hemolysin C (tlyC) from Rickettsia canadensis (strain McKiel).